The primary structure comprises 243 residues: 1-(5-phosphoribosyl)-5-[(5-phosphoribosylamino)methylideneamino] imidazole-4-carboxamide isomerase (243 aa).

D8 (proton acceptor) is an active-site residue. Catalysis depends on D130, which acts as the Proton donor.

Belongs to the HisA/HisF family.

Its subcellular location is the cytoplasm. The enzyme catalyses 1-(5-phospho-beta-D-ribosyl)-5-[(5-phospho-beta-D-ribosylamino)methylideneamino]imidazole-4-carboxamide = 5-[(5-phospho-1-deoxy-D-ribulos-1-ylimino)methylamino]-1-(5-phospho-beta-D-ribosyl)imidazole-4-carboxamide. Its pathway is amino-acid biosynthesis; L-histidine biosynthesis; L-histidine from 5-phospho-alpha-D-ribose 1-diphosphate: step 4/9. The sequence is that of 1-(5-phosphoribosyl)-5-[(5-phosphoribosylamino)methylideneamino] imidazole-4-carboxamide isomerase from Methylococcus capsulatus (strain ATCC 33009 / NCIMB 11132 / Bath).